The chain runs to 249 residues: Uridylate kinase (249 aa).

13–16 contacts ATP; that stretch reads KLSG. A UMP-binding site is contributed by glycine 55. 2 residues coordinate ATP: glycine 56 and arginine 60. UMP is bound by residues aspartate 75 and 136-143; that span reads IGNPFFTT. 3 residues coordinate ATP: threonine 163, phenylalanine 169, and aspartate 172.

It belongs to the UMP kinase family. As to quaternary structure, homohexamer.

It localises to the cytoplasm. The catalysed reaction is UMP + ATP = UDP + ADP. Its pathway is pyrimidine metabolism; CTP biosynthesis via de novo pathway; UDP from UMP (UMPK route): step 1/1. Its activity is regulated as follows. Inhibited by UTP. Its function is as follows. Catalyzes the reversible phosphorylation of UMP to UDP. The polypeptide is Uridylate kinase (Baumannia cicadellinicola subsp. Homalodisca coagulata).